The sequence spans 126 residues: Topoisomerase I damage affected protein 2 (126 aa).

The residue at position 2 (Ser2) is an N-acetylserine.

This sequence belongs to the TDA2 family.

The protein localises to the cytoplasm. The protein resides in the cell projection. This is Topoisomerase I damage affected protein 2 (TDA2) from Saccharomyces cerevisiae (strain JAY291) (Baker's yeast).